Consider the following 119-residue polypeptide: U-scoloptoxin(01)-Er1a (119 aa).

The signal sequence occupies residues 1-22 (MEIHSNIILLLLIALFAIFVKM). The 59-residue stretch at 39 to 97 (NFACSGKKPGFYADEGFDCQVYHMCSPEGQLTTYLCGPGTIFNQKKLVCDLPTNYNCAD) folds into the Chitin-binding type-2 domain. An intrachain disulfide couples Cys74 to Cys87.

Belongs to the scoloptoxin-01 family. Contains 3 disulfide bonds. As to expression, expressed by the venom gland.

The protein resides in the secreted. The chain is U-scoloptoxin(01)-Er1a from Ethmostigmus rubripes (Giant centipede).